The following is a 754-amino-acid chain: MLPGCIFLMILLIPQVKEKFILGVEGQQLVRPKKLPLIQKRDTGHTHDDDILKTYEEELLYEIKLNRKTLVLHLLRSREFLGSNYSETFYSMKGEAFTRHPQIMDHCFYQGSIVHEYDSAASISTCNGLRGFFRINDQRYLIEPVKYSDEGEHLVFKYNLRVPYGANYSCTELNFTRKTVPGDNESEEDSKIKGIHDEKYVELFIVADDTVYRRNGHPHNKLRNRIWGMVNFVNMIYKTLNIHVTLVGIEIWTHEDKIELYSNIETTLLRFSFWQEKILKTRKDFDHVVLLSGKWLYSHVQGISYPGGMCLPYYSTSIIKDLLPDTNIIANRMAHQLGHNLGMQHDEFPCTCPSGKCVMDSDGSIPALKFSKCSQNQYHQYLKDYKPTCMLNIPFPYNFHDFQFCGNKKLDEGEECDCGPAQECTNPCCDAHTCVLKPGFTCAEGECCESCQIKKAGSICRPAKDECDFPEMCTGHSPACPKDQFRVNGFPCKNSEGYCFMGKCPTREDQCSELFDDEAIESHDICYKMNTKGNKFGYCKNKENRFLPCEEKDVRCGKIYCTGGELSSLLGEDKTYHLKDPQKNATVKCKTIFLYHDSTDIGLVASGTKCGEGMVCNNGECLNMEKVYISTNCPSQCNENPVDGHGLQCHCEEGQAPVACEETLHVTNITILVVVLVLVIVGIGVLILLVRYRKCIKLKQVQSPPTETLGVENKGYFGDEQQIRTEPILPEIHFLNKPASKDSRGIADPNQSAK.

Positions 1-18 (MLPGCIFLMILLIPQVKE) are cleaved as a signal peptide. A propeptide spanning residues 19–176 (KFILGVEGQQ…NYSCTELNFT (158 aa)) is cleaved from the precursor. Topologically, residues 19–668 (KFILGVEGQQ…ACEETLHVTN (650 aa)) are extracellular. Asn-84, Asn-167, Asn-174, and Asn-184 each carry an N-linked (GlcNAc...) asparagine glycan. One can recognise a Peptidase M12B domain in the interval 199-394 (KYVELFIVAD…YKPTCMLNIP (196 aa)). Disulfide bonds link Cys-310–Cys-389, Cys-350–Cys-373, Cys-352–Cys-357, and Cys-460–Cys-480. One can recognise a Disintegrin domain in the interval 402–488 (FQFCGNKKLD…ACPKDQFRVN (87 aa)). N-linked (GlcNAc...) asparagine glycosylation is found at Asn-584 and Asn-668. Residues 669-689 (ITILVVVLVLVIVGIGVLILL) traverse the membrane as a helical segment. The Cytoplasmic portion of the chain corresponds to 690–754 (VRYRKCIKLK…GIADPNQSAK (65 aa)).

Interacts with ITM2B in sperm; the interaction increases following capacitation. Interacts with HSPA5 and CANX.

The protein localises to the membrane. Functionally, required for normal male fertility via maintenance of epithelial cell morphology in the caput epididymis and subsequently correct epididymis lumen structure required for sperm development. Plays a role in sperm motility, flagella morphology and tyrosine phosphorylation during sperm capacitance. Plays a role in normal expression levels of HSPA5, ITM2B and ADAM2 in sperm both prior to and post-capacitation. This is a non catalytic metalloprotease-like protein. In Homo sapiens (Human), this protein is Disintegrin and metalloproteinase domain-containing protein 7.